We begin with the raw amino-acid sequence, 292 residues long: S-adenosyl-L-methionine-dependent Diels-Alderase iccD (292 aa).

A helical membrane pass occupies residues 240-262 (LPVVRMFYVVLLVPYLFVRLLGI).

Belongs to the class I-like SAM-binding methyltransferase superfamily. Erg6/SMT family. Requires S-adenosyl-L-methionine as cofactor.

The protein localises to the membrane. It catalyses the reaction 3-[(2E,4E,8S,10E,12Z)-4,8-dimethyltetradeca-2,4,10,12-tetraenoyl]-4-hydroxy-5-(4-hydroxyphenyl)-1,2-dihydropyridin-2-one = 8-epi-ilicicolin H. Its pathway is mycotoxin biosynthesis. In terms of biological role, S-adenosyl-l-methionine-dependent Diels-Alderase; part of the gene cluster that mediates the biosynthesis of ilicicolin H, a 4-hydroxy-2-pyridonealkaloid that has potent and broad antifungal activities by inhibiting the mitochondrial respiration chain. IccD catalyzes the Diels-Alder reaction that converts the acyclic 2-pyridone intermediate to 8-epi-ilicicolin H. The biosynthesis of ilicicolin H starts with formation of the tetramic acid by the hybrid PKS-NRPS synthetase iccA with the partnering trans-enoyl reductase iccB since iccA lacks a designated enoylreductase (ER) domain. The cytochrome P450 monooxygenase iccC then catalyzes the ring expansion of the tetramate to the acyclic 2-pyridone. The pericyclase iccD further converts the acyclic 2-pyridone into 8-epi-ilicicolin H. Finally, the epimerase iccE converts 8-epi-ilicicolin H into ilicicolin H via epimerization. IccA to iccE are sufficient for ilicicolin H biosynthesis and the roles of the remaining enzymes, iccF, iccG and iccH within the pathway have still to be determined. The polypeptide is S-adenosyl-L-methionine-dependent Diels-Alderase iccD (Talaromyces variabilis (Penicillium variabile)).